The chain runs to 398 residues: Metallophosphoesterase 1 (398 aa).

The chain crosses the membrane as a helical span at residues 25–45 (VCFVSSVLIFCEFFIYYLVIF). A divalent metal cation contacts are provided by D75, D117, N155, H251, H305, and H307. Residues 359–379 (VFAIYWAAGALLVVLVLAHFQ) traverse the membrane as a helical segment. Residues 394-398 (KHKAA) carry the Di-lysine motif motif.

The protein belongs to the metallophosphoesterase superfamily. MPPE1 family. It depends on Mn(2+) as a cofactor.

It localises to the endoplasmic reticulum-Golgi intermediate compartment membrane. In terms of biological role, metallophosphoesterase that catalyzes the removal of a side-chain ethanolamine-phosphate (EtNP) from the second mannose of the GPI-anchor protein intermediate. Participates in the glycan remodeling steps of GPI-anchor maturation to allow an efficient transport of GPI-anchor proteins from the endoplasmic reticulum to the Golgi. This chain is Metallophosphoesterase 1, found in Gallus gallus (Chicken).